The chain runs to 153 residues: Prostaglandin E synthase (153 aa).

Residues 1-13 lie on the Lumenal side of the membrane; sequence MPSPGLVMESGQV. A helical membrane pass occupies residues 14–42; that stretch reads LPAFLLCSTLLVIKMYAVAVITGQMRLRK. A glutathione-binding site is contributed by Arg39. At 43-61 the chain is on the cytoplasmic side; sequence KAFANPEDALKRGGLQYYR. A helical transmembrane segment spans residues 62-91; the sequence is SDPDVERCLRAHRNDMETIYPFLFLGFVYS. Residue 74–78 coordinates glutathione; that stretch reads RNDME. The Lumenal segment spans residues 92–96; the sequence is FLGPN. A helical membrane pass occupies residues 97-120; sequence PLIAWIHFLVVLTGRVVHTVAYLG. Residues His114 and Tyr118 each coordinate glutathione. The Cytoplasmic portion of the chain corresponds to 121 to 124; that stretch reads KLNP. The chain crosses the membrane as a helical span at residues 125-153; the sequence is RLRSGAYVLAQFSCFSMALQILWEVAHHL. 127 to 131 is a glutathione binding site; that stretch reads RSGAY.

It belongs to the MAPEG family. As to quaternary structure, homotrimer. Glutathione is required as a cofactor.

The protein resides in the membrane. It is found in the cytoplasm. The protein localises to the perinuclear region. The catalysed reaction is prostaglandin H2 = prostaglandin E2. It carries out the reaction 2-glyceryl-prostaglandin H2 = 2-glyceryl-prostaglandin E2. It catalyses the reaction prostaglandin G2 = (15S)-15-hydroperoxy-prostaglandin E2. The enzyme catalyses 1-chloro-2,4-dinitrobenzene + glutathione = 2,4-dinitrophenyl-S-glutathione + chloride + H(+). The catalysed reaction is (5S)-hydroperoxy-(6E,8Z,11Z,14Z)-eicosatetraenoate + 2 glutathione = (5S)-hydroxy-(6E,8Z,11Z,14Z)-eicosatetraenoate + glutathione disulfide + H2O. Its pathway is lipid metabolism; prostaglandin biosynthesis. With respect to regulation, activity is increased markedly in macrophages and osteoblasts following pro-inflammatory stimuli. In terms of biological role, terminal enzyme of the cyclooxygenase (COX)-2-mediated prostaglandin E2 (PGE2) biosynthetic pathway. Catalyzes the glutathione-dependent oxidoreduction of prostaglandin endoperoxide H2 (PGH2) to prostaglandin E2 (PGE2) in response to inflammatory stimuli. Plays a key role in inflammation response, fever and pain. Also catalyzes the oxidoreduction of endocannabinoids into prostaglandin glycerol esters and PGG2 into 15-hydroperoxy-PGE2. In addition, displays low glutathione transferase and glutathione-dependent peroxidase activities, toward 1-chloro-2,4-dinitrobenzene and 5-hydroperoxyicosatetraenoic acid (5-HPETE), respectively. This chain is Prostaglandin E synthase (Ptges), found in Mus musculus (Mouse).